A 360-amino-acid chain; its full sequence is Mitogen-activated protein kinase 1 (360 aa).

An N-acetylalanine modification is found at Ala2. Residues 25 to 313 enclose the Protein kinase domain; sequence YTNLSYIGEG…VEQALAHPYL (289 aa). At Ser29 the chain carries Phosphoserine; by SGK1. Residues 31–39 and Lys54 contribute to the ATP site; that span reads IGEGAYGMV. Asp149 functions as the Proton acceptor in the catalytic mechanism. Thr185 carries the phosphothreonine; by MAP2K1 and MAP2K2 modification. Positions 185-187 match the TXY motif; the sequence is TEY. Position 187 is a phosphotyrosine; by MAP2K1 and MAP2K2 (Tyr187). Position 190 is a phosphothreonine; by autocatalysis (Thr190). A phosphoserine mark is found at Ser246, Ser248, and Ser284.

The protein belongs to the protein kinase superfamily. CMGC Ser/Thr protein kinase family. MAP kinase subfamily. In terms of assembly, binds both upstream activators and downstream substrates in multimolecular complexes. Interacts with ADAM15, ARHGEF2, ARRB2, DAPK1 (via death domain), HSF4, IER3, IPO7, MKNK2, MORG1, NISCH, PEA15, SGK1, and isoform 1 of NEK2. Interacts (via phosphorylated form) with TPR (via C-terminal region and phosphorylated form); the interaction requires dimerization of MAPK1/ERK2 and increases following EGF stimulation. Interacts with MAP2K1. Interacts with DUSP6. Interacts (phosphorylated form) with CAV2 ('Tyr-19'-phosphorylated form); the interaction, promoted by insulin, leads to nuclear location and MAPK1 activation. MKNK2 isoform 1 binding prevents from dephosphorylation and inactivation. Interacts with DCC. The phosphorylated form interacts with PML. Interacts with STYX. Interacts with CDK2AP2. Interacts with CAVIN4. Interacts with DUSP7; the interaction enhances DUSP7 phosphatase activity. Interacts with GIT1; this interaction is necessary for MAPK1 localization to focal adhesions. Interacts with ZNF263. Interacts with phosphoglycerate kinase PGK1; the interaction is direct, occurs under hypoxic conditions, and promotes interaction between PGK1 and PIN1. Mg(2+) is required as a cofactor. In terms of processing, dually phosphorylated on Thr-185 and Tyr-187, which activates the enzyme. Phosphorylated upon FLT3 and KIT signaling. Phosphorylation on Ser-29 by SGK1 results in its activation by enhancing its interaction with MAP2K1/MEK1 and MAP2K2/MEK2. Phosphorylation at Ser-246 and Ser-248 as well as autophosphorylation at Thr-190 promote nuclear localization. Ligand-activated ALK induces tyrosine phosphorylation. Dephosphorylated by PTPRJ at Tyr-187. Dephosphorylated by DUSP1 and DUSP2 at Thr-185 and Tyr-187. ISGylated. Post-translationally, ubiquitinated by TRIM15 via 'Lys-63'-linked ubiquitination; leading to activation. Deubiquitinated by CYLD.

Its subcellular location is the nucleus. It localises to the cytoplasm. It is found in the cytoskeleton. The protein localises to the microtubule organizing center. The protein resides in the centrosome. Its subcellular location is the spindle. It localises to the membrane. It is found in the caveola. The protein localises to the cell junction. The protein resides in the focal adhesion. The enzyme catalyses L-seryl-[protein] + ATP = O-phospho-L-seryl-[protein] + ADP + H(+). It catalyses the reaction L-threonyl-[protein] + ATP = O-phospho-L-threonyl-[protein] + ADP + H(+). Phosphorylated by MAP2K1/MEK1 and MAP2K2/MEK2 on Thr-185 and Tyr-187 in response to external stimuli like insulin or NGF. Both phosphorylations are required for activity. This phosphorylation causes dramatic conformational changes, which enable full activation and interaction of MAPK1/ERK2 with its substrates. Phosphorylation on Ser-29 by SGK1 results in its activation by enhancing its interaction with MAP2K1/MEK1 and MAP2K2/MEK2. Dephosphorylated and inactivated by DUSP1, DUSP3, DUSP6 and DUSP9. Inactivated by pyrimidylpyrrole inhibitors. In terms of biological role, serine/threonine kinase which acts as an essential component of the MAP kinase signal transduction pathway. MAPK1/ERK2 and MAPK3/ERK1 are the 2 MAPKs which play an important role in the MAPK/ERK cascade. They participate also in a signaling cascade initiated by activated KIT and KITLG/SCF. Depending on the cellular context, the MAPK/ERK cascade mediates diverse biological functions such as cell growth, adhesion, survival and differentiation through the regulation of transcription, translation, cytoskeletal rearrangements. The MAPK/ERK cascade also plays a role in initiation and regulation of meiosis, mitosis, and postmitotic functions in differentiated cells by phosphorylating a number of transcription factors. About 160 substrates have already been discovered for ERKs. Many of these substrates are localized in the nucleus, and seem to participate in the regulation of transcription upon stimulation. However, other substrates are found in the cytosol as well as in other cellular organelles, and those are responsible for processes such as translation, mitosis and apoptosis. Moreover, the MAPK/ERK cascade is also involved in the regulation of the endosomal dynamics, including lysosome processing and endosome cycling through the perinuclear recycling compartment (PNRC); as well as in the fragmentation of the Golgi apparatus during mitosis. The substrates include transcription factors (such as ATF2, BCL6, ELK1, ERF, FOS, HSF4 or SPZ1), cytoskeletal elements (such as CANX, CTTN, GJA1, MAP2, MAPT, PXN, SORBS3 or STMN1), regulators of apoptosis (such as BAD, BTG2, CASP9, DAPK1, IER3, MCL1 or PPARG), regulators of translation (such as EIF4EBP1 and FXR1) and a variety of other signaling-related molecules (like ARHGEF2, DCC, FRS2 or GRB10). Protein kinases (such as RAF1, RPS6KA1/RSK1, RPS6KA3/RSK2, RPS6KA2/RSK3, RPS6KA6/RSK4, SYK, MKNK1/MNK1, MKNK2/MNK2, RPS6KA5/MSK1, RPS6KA4/MSK2, MAPKAPK3 or MAPKAPK5) and phosphatases (such as DUSP1, DUSP4, DUSP6 or DUSP16) are other substrates which enable the propagation the MAPK/ERK signal to additional cytosolic and nuclear targets, thereby extending the specificity of the cascade. Mediates phosphorylation of TPR in response to EGF stimulation. May play a role in the spindle assembly checkpoint. Phosphorylates PML and promotes its interaction with PIN1, leading to PML degradation. Phosphorylates CDK2AP2. Phosphorylates phosphoglycerate kinase PGK1 under hypoxic conditions to promote its targeting to the mitochondrion and suppress the formation of acetyl-coenzyme A from pyruvate. Its function is as follows. Acts as a transcriptional repressor. Binds to a [GC]AAA[GC] consensus sequence. Repress the expression of interferon gamma-induced genes. Seems to bind to the promoter of CCL5, DMP1, IFIH1, IFITM1, IRF7, IRF9, LAMP3, OAS1, OAS2, OAS3 and STAT1. Transcriptional activity is independent of kinase activity. The chain is Mitogen-activated protein kinase 1 from Bos taurus (Bovine).